We begin with the raw amino-acid sequence, 362 residues long: Isopentenyl-diphosphate delta-isomerase (362 aa).

6-7 (RK) contacts substrate. FMN-binding positions include 65 to 67 (SIT), Ser-95, and Asn-124. Residue 95 to 97 (SQR) coordinates substrate. Gln-158 provides a ligand contact to substrate. Glu-159 is a binding site for Mg(2+). Residues Lys-189, Thr-219, 269 to 271 (GVR), and 290 to 291 (AL) each bind FMN.

The protein belongs to the IPP isomerase type 2 family. As to quaternary structure, homooctamer. Dimer of tetramers. Requires FMN as cofactor. NADPH is required as a cofactor. The cofactor is Mg(2+).

It localises to the cytoplasm. The enzyme catalyses isopentenyl diphosphate = dimethylallyl diphosphate. In terms of biological role, involved in the biosynthesis of isoprenoids. Catalyzes the 1,3-allylic rearrangement of the homoallylic substrate isopentenyl (IPP) to its allylic isomer, dimethylallyl diphosphate (DMAPP). In Methanococcoides burtonii (strain DSM 6242 / NBRC 107633 / OCM 468 / ACE-M), this protein is Isopentenyl-diphosphate delta-isomerase.